Consider the following 318-residue polypeptide: tRNA-cytidine(32) 2-sulfurtransferase (318 aa).

The segment at 1 to 29 (MNHVSSTKPDTAPSKHLTSSHIDATDQNN) is disordered. Polar residues predominate over residues 16 to 27 (HLTSSHIDATDQ). A PP-loop motif motif is present at residues 64-69 (SGGKDS). Cys-139, Cys-142, and Cys-230 together coordinate [4Fe-4S] cluster.

It belongs to the TtcA family. As to quaternary structure, homodimer. The cofactor is Mg(2+). [4Fe-4S] cluster is required as a cofactor.

It localises to the cytoplasm. It catalyses the reaction cytidine(32) in tRNA + S-sulfanyl-L-cysteinyl-[cysteine desulfurase] + AH2 + ATP = 2-thiocytidine(32) in tRNA + L-cysteinyl-[cysteine desulfurase] + A + AMP + diphosphate + H(+). It participates in tRNA modification. Functionally, catalyzes the ATP-dependent 2-thiolation of cytidine in position 32 of tRNA, to form 2-thiocytidine (s(2)C32). The sulfur atoms are provided by the cysteine/cysteine desulfurase (IscS) system. This is tRNA-cytidine(32) 2-sulfurtransferase from Pseudoalteromonas atlantica (strain T6c / ATCC BAA-1087).